Consider the following 1270-residue polypeptide: DNA-directed RNA polymerase subunit beta (1270 aa).

Belongs to the RNA polymerase beta chain family. In terms of assembly, the RNAP catalytic core consists of 2 alpha, 1 beta, 1 beta' and 1 omega subunit. When a sigma factor is associated with the core the holoenzyme is formed, which can initiate transcription.

The catalysed reaction is RNA(n) + a ribonucleoside 5'-triphosphate = RNA(n+1) + diphosphate. Its function is as follows. DNA-dependent RNA polymerase catalyzes the transcription of DNA into RNA using the four ribonucleoside triphosphates as substrates. This Flavobacterium johnsoniae (strain ATCC 17061 / DSM 2064 / JCM 8514 / BCRC 14874 / CCUG 350202 / NBRC 14942 / NCIMB 11054 / UW101) (Cytophaga johnsonae) protein is DNA-directed RNA polymerase subunit beta.